Here is a 423-residue protein sequence, read N- to C-terminus: Serine--tRNA ligase (423 aa).

231–233 (TGE) contributes to the L-serine binding site. Position 262 to 264 (262 to 264 (RSE)) interacts with ATP. Glutamate 285 lines the L-serine pocket. 349-352 (EISS) contributes to the ATP binding site. Serine 385 provides a ligand contact to L-serine.

The protein belongs to the class-II aminoacyl-tRNA synthetase family. Type-1 seryl-tRNA synthetase subfamily. In terms of assembly, homodimer. The tRNA molecule binds across the dimer.

It localises to the cytoplasm. It catalyses the reaction tRNA(Ser) + L-serine + ATP = L-seryl-tRNA(Ser) + AMP + diphosphate + H(+). The catalysed reaction is tRNA(Sec) + L-serine + ATP = L-seryl-tRNA(Sec) + AMP + diphosphate + H(+). It participates in aminoacyl-tRNA biosynthesis; selenocysteinyl-tRNA(Sec) biosynthesis; L-seryl-tRNA(Sec) from L-serine and tRNA(Sec): step 1/1. Functionally, catalyzes the attachment of serine to tRNA(Ser). Is also able to aminoacylate tRNA(Sec) with serine, to form the misacylated tRNA L-seryl-tRNA(Sec), which will be further converted into selenocysteinyl-tRNA(Sec). This Coxiella burnetii (strain RSA 331 / Henzerling II) protein is Serine--tRNA ligase.